We begin with the raw amino-acid sequence, 508 residues long: Glycerol kinase (508 aa).

Thr-15 provides a ligand contact to ADP. ATP contacts are provided by Thr-15, Ser-16, and Ser-17. Thr-15 serves as a coordination point for sn-glycerol 3-phosphate. Position 19 (Arg-19) interacts with ADP. Positions 85, 86, 138, and 251 each coordinate sn-glycerol 3-phosphate. 5 residues coordinate glycerol: Arg-85, Glu-86, Tyr-138, Asp-251, and Gln-252. ADP is bound by residues Thr-273, Gly-317, and Gly-419. 3 residues coordinate ATP: Thr-273, Gly-317, and Gly-419.

Belongs to the FGGY kinase family.

The catalysed reaction is glycerol + ATP = sn-glycerol 3-phosphate + ADP + H(+). It participates in polyol metabolism; glycerol degradation via glycerol kinase pathway; sn-glycerol 3-phosphate from glycerol: step 1/1. Inhibited by fructose 1,6-bisphosphate (FBP). Its function is as follows. Key enzyme in the regulation of glycerol uptake and metabolism. Catalyzes the phosphorylation of glycerol to yield sn-glycerol 3-phosphate. This chain is Glycerol kinase, found in Mycoplasma pneumoniae (strain ATCC 29342 / M129 / Subtype 1) (Mycoplasmoides pneumoniae).